A 210-amino-acid chain; its full sequence is Probable GTP-binding protein EngB (210 aa).

In terms of domain architecture, EngB-type G spans 29–203; sequence NGIEIAFAGR…SNKLDSWFAP (175 aa). GTP is bound by residues 37-44, 64-68, 82-85, 149-152, and 181-184; these read GRSNAGKS, GRTQL, DLPG, TKAD, and IYSA. Residues Ser-44 and Thr-66 each coordinate Mg(2+).

Belongs to the TRAFAC class TrmE-Era-EngA-EngB-Septin-like GTPase superfamily. EngB GTPase family. The cofactor is Mg(2+).

Necessary for normal cell division and for the maintenance of normal septation. The polypeptide is Probable GTP-binding protein EngB (Haemophilus ducreyi (strain 35000HP / ATCC 700724)).